A 255-amino-acid chain; its full sequence is tRNA (guanine-N(1)-)-methyltransferase (255 aa).

Residues Gly113 and 133 to 138 (IGDYVL) each bind S-adenosyl-L-methionine.

Belongs to the RNA methyltransferase TrmD family. As to quaternary structure, homodimer.

Its subcellular location is the cytoplasm. The catalysed reaction is guanosine(37) in tRNA + S-adenosyl-L-methionine = N(1)-methylguanosine(37) in tRNA + S-adenosyl-L-homocysteine + H(+). In terms of biological role, specifically methylates guanosine-37 in various tRNAs. The protein is tRNA (guanine-N(1)-)-methyltransferase of Salmonella paratyphi A (strain ATCC 9150 / SARB42).